Consider the following 136-residue polypeptide: NADPH-dependent 7-cyano-7-deazaguanine reductase (136 aa).

Cysteine 50 acts as the Thioimide intermediate in catalysis. Aspartate 57 (proton donor) is an active-site residue. Substrate is bound by residues 72–74 and 91–92; these read YEL and HE.

The protein belongs to the GTP cyclohydrolase I family. QueF type 1 subfamily.

It is found in the cytoplasm. It carries out the reaction 7-aminomethyl-7-carbaguanine + 2 NADP(+) = 7-cyano-7-deazaguanine + 2 NADPH + 3 H(+). It participates in tRNA modification; tRNA-queuosine biosynthesis. Catalyzes the NADPH-dependent reduction of 7-cyano-7-deazaguanine (preQ0) to 7-aminomethyl-7-deazaguanine (preQ1). In Prochlorococcus marinus (strain MIT 9301), this protein is NADPH-dependent 7-cyano-7-deazaguanine reductase.